The sequence spans 580 residues: Probable glucomannan 4-beta-mannosyltransferase 2 (580 aa).

The segment covering 1 to 12 has biased composition (polar residues); that stretch reads MSTNGGAPSQKR. The disordered stretch occupies residues 1–33; that stretch reads MSTNGGAPSQKRSWLPSRPLLTTTTQTYPPPLL. A compositionally biased stretch (low complexity) spans 15 to 27; it reads LPSRPLLTTTTQT. The chain crosses the membrane as a helical span at residues 85–105; it reads AVWACLAMSAMLVAEAAWMGL. Asp-182 is an active-site residue. Positions 241 and 243 each coordinate substrate. The active site involves Asp-335. The next 4 helical transmembrane spans lie at 414–434, 437–457, 528–548, and 554–574; these read AIAPILTFLFYCIVIPLSAMV, VTIPVWGLVYIPTAITIMNAI, IYIPELLLALYLLICASYDFV, and YYIYIYLQAVAFTVMGFGFVG.

It belongs to the glycosyltransferase 2 family. Plant cellulose synthase-like A subfamily.

Its subcellular location is the golgi apparatus membrane. It catalyses the reaction GDP-mannose + (glucomannan)n = GDP + (glucomannan)n+1.. Probable mannan synthase which consists of a 4-beta-mannosyltransferase activity on mannan using GDP-mannose. The beta-1,4-mannan product is the backbone for galactomannan synthesis by galactomannan galactosyltransferase. Galactomannan is a noncellulosic polysaccharides of plant cell wall. The protein is Probable glucomannan 4-beta-mannosyltransferase 2 of Oryza sativa subsp. japonica (Rice).